The following is a 367-amino-acid chain: Uracil nucleotide/cysteinyl leukotriene receptor (367 aa).

The tract at residues 1-28 (MSKRSWWAGSRKPPREMLKLSGSDSSQS) is disordered. At 1–64 (MSKRSWWAGS…TPLENMLFAS (64 aa)) the chain is on the extracellular side. Residue Asn42 is glycosylated (N-linked (GlcNAc...) asparagine). Residues 65 to 85 (FYLLDFILALVGNTLALWLFI) form a helical membrane-spanning segment. Residues 86-92 (RDHKSGT) lie on the Cytoplasmic side of the membrane. Residues 93–113 (PANVFLMHLAVADLSCVLVLP) traverse the membrane as a helical segment. Residues 114–133 (TRLVYHFSGNHWPFGEIACR) lie on the Extracellular side of the membrane. Cys132 and Cys209 are disulfide-bonded. A helical transmembrane segment spans residues 134–154 (LTGFLFYLNMYASIYFLTCIS). The Cytoplasmic segment spans residues 155 to 175 (ADRFLAIVHPVKSLKLRRPLY). A helical transmembrane segment spans residues 176–196 (AHLACAFLWVVVAVAMAPLLV). Residues 197–223 (SPQTVQTNHTVVCLQLYREKASHHALV) are Extracellular-facing. Asn204 carries an N-linked (GlcNAc...) asparagine glycan. Residues 224-244 (SLAVAFTFPFITTVTCYLLII) traverse the membrane as a helical segment. The Cytoplasmic segment spans residues 245–260 (RSLRQGLRVEKRLKTK). A helical transmembrane segment spans residues 261-281 (AVRMIAIVLAIFLVCFVPYHV). A glycan (N-linked (GlcNAc...) asparagine) is linked at Asn282. Residues 282–308 (NRSVYVLHYRSHGASCATQRILALANR) lie on the Extracellular side of the membrane. The chain crosses the membrane as a helical span at residues 309-329 (ITSCLTSLNGALDPIMYFFVA). Residues 330–367 (EKFRHALCNLLCGKRLKGPPPSFEGKTNESSLSAKSEL) are Cytoplasmic-facing.

The protein belongs to the G-protein coupled receptor 1 family. In terms of tissue distribution, expressed in brain, kidney, heart and umbilical vein endothelial cells. Highest level in brain.

The protein localises to the cell membrane. Its function is as follows. Dual specificity receptor for uracil nucleotides and cysteinyl leukotrienes (CysLTs). Signals through G(i) and inhibition of adenylyl cyclase. May mediate brain damage by nucleotides and CysLTs following ischemia. In Homo sapiens (Human), this protein is Uracil nucleotide/cysteinyl leukotriene receptor (GPR17).